The chain runs to 339 residues: DNA-directed RNA polymerase subunit alpha (339 aa).

An alpha N-terminal domain (alpha-NTD) region spans residues methionine 1–glutamate 235. Positions lysine 267 to phenylalanine 339 are alpha C-terminal domain (alpha-CTD).

Belongs to the RNA polymerase alpha chain family. In terms of assembly, in plastids the minimal PEP RNA polymerase catalytic core is composed of four subunits: alpha, beta, beta', and beta''. When a (nuclear-encoded) sigma factor is associated with the core the holoenzyme is formed, which can initiate transcription.

The protein resides in the plastid. It localises to the chloroplast. The catalysed reaction is RNA(n) + a ribonucleoside 5'-triphosphate = RNA(n+1) + diphosphate. Its function is as follows. DNA-dependent RNA polymerase catalyzes the transcription of DNA into RNA using the four ribonucleoside triphosphates as substrates. This is DNA-directed RNA polymerase subunit alpha from Drimys granadensis.